A 333-amino-acid chain; its full sequence is 4-hydroxy-3-methylbut-2-enyl diphosphate reductase (333 aa).

Residue cysteine 20 participates in [4Fe-4S] cluster binding. (2E)-4-hydroxy-3-methylbut-2-enyl diphosphate-binding residues include histidine 49 and histidine 85. Histidine 49 and histidine 85 together coordinate dimethylallyl diphosphate. Positions 49 and 85 each coordinate isopentenyl diphosphate. Cysteine 107 is a binding site for [4Fe-4S] cluster. Histidine 135 serves as a coordination point for (2E)-4-hydroxy-3-methylbut-2-enyl diphosphate. A dimethylallyl diphosphate-binding site is contributed by histidine 135. Position 135 (histidine 135) interacts with isopentenyl diphosphate. The active-site Proton donor is the glutamate 137. Threonine 176 contacts (2E)-4-hydroxy-3-methylbut-2-enyl diphosphate. [4Fe-4S] cluster is bound at residue cysteine 206. 4 residues coordinate (2E)-4-hydroxy-3-methylbut-2-enyl diphosphate: serine 234, serine 235, asparagine 236, and serine 279. Positions 234, 235, 236, and 279 each coordinate dimethylallyl diphosphate. 4 residues coordinate isopentenyl diphosphate: serine 234, serine 235, asparagine 236, and serine 279.

This sequence belongs to the IspH family. Requires [4Fe-4S] cluster as cofactor.

It catalyses the reaction isopentenyl diphosphate + 2 oxidized [2Fe-2S]-[ferredoxin] + H2O = (2E)-4-hydroxy-3-methylbut-2-enyl diphosphate + 2 reduced [2Fe-2S]-[ferredoxin] + 2 H(+). The enzyme catalyses dimethylallyl diphosphate + 2 oxidized [2Fe-2S]-[ferredoxin] + H2O = (2E)-4-hydroxy-3-methylbut-2-enyl diphosphate + 2 reduced [2Fe-2S]-[ferredoxin] + 2 H(+). Its pathway is isoprenoid biosynthesis; dimethylallyl diphosphate biosynthesis; dimethylallyl diphosphate from (2E)-4-hydroxy-3-methylbutenyl diphosphate: step 1/1. The protein operates within isoprenoid biosynthesis; isopentenyl diphosphate biosynthesis via DXP pathway; isopentenyl diphosphate from 1-deoxy-D-xylulose 5-phosphate: step 6/6. Its function is as follows. Catalyzes the conversion of 1-hydroxy-2-methyl-2-(E)-butenyl 4-diphosphate (HMBPP) into a mixture of isopentenyl diphosphate (IPP) and dimethylallyl diphosphate (DMAPP). Acts in the terminal step of the DOXP/MEP pathway for isoprenoid precursor biosynthesis. This Rhizobium johnstonii (strain DSM 114642 / LMG 32736 / 3841) (Rhizobium leguminosarum bv. viciae) protein is 4-hydroxy-3-methylbut-2-enyl diphosphate reductase.